Here is a 932-residue protein sequence, read N- to C-terminus: UPF0182 protein Syncc9902_1151 (932 aa).

The next 9 helical transmembrane spans lie at 4-24 (FLWI…VEWV), 40-60 (MLQL…VLWL), 85-105 (VLMV…DLAI), 124-144 (MASE…VSLC), 151-171 (WVAV…WGVW), 201-221 (IQLG…HAVW), 243-263 (YRWL…LVWL), 293-313 (LLAF…IGHL), and 315-335 (RLLL…TPLT).

This sequence belongs to the UPF0182 family.

The protein resides in the cell membrane. This chain is UPF0182 protein Syncc9902_1151, found in Synechococcus sp. (strain CC9902).